A 182-amino-acid chain; its full sequence is Auxin-responsive protein IAA9 (182 aa).

The disordered stretch occupies residues 1 to 41 (MELELGLAPPNSGHLVVDELSSSSSSGGGSGSAPVSASSAG). Residues 3–7 (LELGL) carry the EAR-like (transcriptional repression) motif. The span at 32–41 (SAPVSASSAG) shows a compositional bias: low complexity. In terms of domain architecture, PB1 spans 92 to 182 (ANYVKVKKEG…RSVKRLKILG (91 aa)).

Belongs to the Aux/IAA family. Homodimers and heterodimers. Expressed in etiolated shoots and flowers.

Its subcellular location is the nucleus. In terms of biological role, aux/IAA proteins are short-lived transcriptional factors that function as repressors of early auxin response genes at low auxin concentrations. This Oryza sativa subsp. japonica (Rice) protein is Auxin-responsive protein IAA9 (IAA9).